The following is a 415-amino-acid chain: Heterogeneous nuclear ribonucleoprotein F (415 aa).

Residue Met1 is modified to N-acetylmethionine. Met2 carries the post-translational modification N-acetylmethionine; in Heterogeneous nuclear ribonucleoprotein F, N-terminally processed. Positions 11-90 (YVVKLRGLPW…RYIEVFKSHR (80 aa)) constitute an RRM 1 domain. Lys72 is covalently cross-linked (Glycyl lysine isopeptide (Lys-Gly) (interchain with G-Cter in SUMO)). The interaction with RNA stretch occupies residues 81-86 (RYIEVF). Lys87 is covalently cross-linked (Glycyl lysine isopeptide (Lys-Gly) (interchain with G-Cter in SUMO2)). Residues Ser104, Ser107, and Ser161 each carry the phosphoserine modification. The region spanning 111–188 (GFVRLRGLPF…RYIEVFKSSQ (78 aa)) is the RRM 2 domain. A Glycyl lysine isopeptide (Lys-Gly) (interchain with G-Cter in SUMO2) cross-link involves residue Lys167. The segment at 179 to 184 (RYIEVF) is interaction with RNA. A Glycyl lysine isopeptide (Lys-Gly) (interchain with G-Cter in SUMO2) cross-link involves residue Lys185. Residues Ser187, Ser193, and Ser195 each carry the phosphoserine modification. The residue at position 200 (Lys200) is an N6-acetyllysine; alternate. Lys200 is covalently cross-linked (Glycyl lysine isopeptide (Lys-Gly) (interchain with G-Cter in SUMO2); alternate). At Thr215 the chain carries Phosphothreonine. N6-acetyllysine; alternate is present on Lys224. Lys224 participates in a covalent cross-link: Glycyl lysine isopeptide (Lys-Gly) (interchain with G-Cter in SUMO2); alternate. At Ser265 the chain carries Phosphoserine. The RRM 3 domain maps to 289–366 (HCVHMRGLPY…IELFLNSTTG (78 aa)). Residues 355 to 360 (RYIELF) form an interaction with RNA region.

In terms of assembly, identified in the spliceosome C complex. Interacts with AGO1, AGO2, TBP and TXNL4/DIM1. Post-translationally, sumoylated.

The protein resides in the nucleus. The protein localises to the nucleoplasm. Functionally, component of the heterogeneous nuclear ribonucleoprotein (hnRNP) complexes which provide the substrate for the processing events that pre-mRNAs undergo before becoming functional, translatable mRNAs in the cytoplasm. Plays a role in the regulation of alternative splicing events. Binds G-rich sequences in pre-mRNAs and keeps target RNA in an unfolded state. In Mus musculus (Mouse), this protein is Heterogeneous nuclear ribonucleoprotein F (Hnrnpf).